Here is a 315-residue protein sequence, read N- to C-terminus: Peroxidase 1 (315 aa).

A signal peptide spans 1-21 (MASSSYTSLLVLVALVTAASA). Gln-22 bears the Pyrrolidone carboxylic acid mark. 4 cysteine pairs are disulfide-bonded: Cys-32-Cys-107, Cys-65-Cys-70, Cys-113-Cys-310, and Cys-193-Cys-219. The Proton acceptor role is filled by His-63. Ca(2+) is bound by residues Asp-64, Val-67, Gly-69, Asp-71, and Ser-73. Pro-155 lines the substrate pocket. A glycan (N-linked (GlcNAc...) asparagine) is linked at Asn-158. His-186 lines the heme b pocket. Thr-187 is a binding site for Ca(2+). Residues Asp-234, Thr-237, and Asp-242 each contribute to the Ca(2+) site. N-linked (GlcNAc...) asparagine glycosylation is present at Asn-265.

The protein belongs to the peroxidase family. Classical plant (class III) peroxidase subfamily. It depends on Ca(2+) as a cofactor. The cofactor is heme b.

Its subcellular location is the secreted. It catalyses the reaction 2 a phenolic donor + H2O2 = 2 a phenolic radical donor + 2 H2O. Functionally, removal of H(2)O(2), oxidation of toxic reductants, biosynthesis and degradation of lignin, suberization, auxin catabolism, response to environmental stresses such as wounding, pathogen attack and oxidative stress. These functions might be dependent on each isozyme/isoform in each plant tissue. In terms of biological role, involved in defense response to powdery meldew fungus. The chain is Peroxidase 1 from Hordeum vulgare (Barley).